Consider the following 392-residue polypeptide: MAIFRDQAENHVEHDRSIEDRRRHRQLVEKSIKENLGDILSEESIIGETKNKKYKIPIRGIKEYQFIYGANNKGVTTGTGEERRGDRISSDKRKAISNNKAGNQEGKDIYETEITLEELMDYIVEDLDLPNLDRKKYSEIIVESAAKKRGYQKYGVRPRLAKKKTVMCKIARKQGKKRALREIGEEAEIGRFPFREDDLRYYKVKKHPKKESNAVMIFIMDVSGSMDNTKKYLARSFFFVLSRFIRRKYNNVAFEFISHTTTAKNVNEYEFFHKGESGGTYISSGINAAIDLIKEKYNPGVWNIYPFYASDGDNWSEDNEKAMEAVNEISDLSNMFGYIELLPSTYSTTMFYRFKKEISKENFVSVTVKEKKDLWNAIKYMLSEELQEKNKE.

A disordered region spans residues 75–100 (VTTGTGEERRGDRISSDKRKAISNNK). The span at 80–94 (GEERRGDRISSDKRK) shows a compositional bias: basic and acidic residues.

Belongs to the UPF0229 family.

This is UPF0229 protein CPE1333 from Clostridium perfringens (strain 13 / Type A).